We begin with the raw amino-acid sequence, 249 residues long: 23S rRNA (guanosine-2'-O-)-methyltransferase RlmB (249 aa).

3 residues coordinate S-adenosyl-L-methionine: glycine 200, isoleucine 220, and leucine 229.

It belongs to the class IV-like SAM-binding methyltransferase superfamily. RNA methyltransferase TrmH family. RlmB subfamily.

It localises to the cytoplasm. It catalyses the reaction guanosine(2251) in 23S rRNA + S-adenosyl-L-methionine = 2'-O-methylguanosine(2251) in 23S rRNA + S-adenosyl-L-homocysteine + H(+). Functionally, specifically methylates the ribose of guanosine 2251 in 23S rRNA. The chain is 23S rRNA (guanosine-2'-O-)-methyltransferase RlmB from Xylella fastidiosa (strain 9a5c).